We begin with the raw amino-acid sequence, 246 residues long: MEASPRSLTSCTLGPLDQKFSWEQLSELEAYFKVEPYPDLQDRKIMATRLKLKEEQVEAWFIQRSLEEEMRPPLARLQQSALDGTSSPSHKALCCRPPSWKYRLIPINPPESSTSCLKDSKTVLISKTELTDEQFQKLRKHFETDRCPNEETLQAFAEELKLRKDLIRSWFITQRHRMRGYRRLFMRYYRDWKTSREYSTTRSFDRQKNSKECSQNDPGLPEALEALKRLKLSSGYQSRDGMSQDF.

2 DNA-binding regions (homeobox) span residues 22-72 and 129-182; these read WEQL…EMRP and ELTD…RGYR. A Nuclear localization signal motif is present at residues 163–177; that stretch reads RKDLIRSWFITQRHR.

The protein belongs to the paired homeobox family. In terms of tissue distribution, specifically expressed during the preimplantation stages of embryonic development, between the four-cell to eight-cell stage and the morula stage. Expressed in adult testis. As to expression, detected in early embryos; expression decreases gradually with embryonic development. Also expressed in extraembryonic tissues after E14.5, expression level increases drastically until E18.5, immediately before partum.

Its subcellular location is the nucleus. Its function is as follows. Transcription factor that acts as a regulator of embryonic stem cell differentiation during the preimplantation stages of embryonic development. Functionally, transcription factor that acts as a positive regulator of embryonic stem cell differentiation. In terms of biological role, transcription factor that promotes embryonic stem cell pluripotency. Transcription factor that promotes embryonic stem cell pluripotency. Also involved in extraembryonic tissues development by promoting the expression of placental prolactin family genes. The polypeptide is Homeobox protein Crxos (Mus musculus (Mouse)).